We begin with the raw amino-acid sequence, 490 residues long: Acetyl-coenzyme A carboxylase carboxyl transferase subunit beta, chloroplastic (490 aa).

The tract at residues 184–203 is disordered; that stretch reads LNSSENEGSSRRTRTKGSDL. Residues 221-490 enclose the CoA carboxyltransferase N-terminal domain; that stretch reads LWVQCENCYG…PLNQKSSKIK (270 aa). The Zn(2+) site is built by Cys225, Cys228, Cys244, and Cys247. The C4-type zinc finger occupies 225 to 247; sequence CENCYGLNYKKFLKSKMNICEQC.

Belongs to the AccD/PCCB family. Acetyl-CoA carboxylase is a heterohexamer composed of biotin carboxyl carrier protein, biotin carboxylase and 2 subunits each of ACCase subunit alpha and ACCase plastid-coded subunit beta (accD). The cofactor is Zn(2+).

The protein localises to the plastid. The protein resides in the chloroplast stroma. It carries out the reaction N(6)-carboxybiotinyl-L-lysyl-[protein] + acetyl-CoA = N(6)-biotinyl-L-lysyl-[protein] + malonyl-CoA. The protein operates within lipid metabolism; malonyl-CoA biosynthesis; malonyl-CoA from acetyl-CoA: step 1/1. In terms of biological role, component of the acetyl coenzyme A carboxylase (ACC) complex. Biotin carboxylase (BC) catalyzes the carboxylation of biotin on its carrier protein (BCCP) and then the CO(2) group is transferred by the transcarboxylase to acetyl-CoA to form malonyl-CoA. The chain is Acetyl-coenzyme A carboxylase carboxyl transferase subunit beta, chloroplastic from Solanum bulbocastanum (Wild potato).